Here is a 279-residue protein sequence, read N- to C-terminus: Putative expansin-A26 (279 aa).

The signal sequence occupies residues M1 to G27. An Expansin-like EG45 domain is found at Q76–G186. One can recognise an Expansin-like CBD domain in the interval Y196–G275.

It belongs to the expansin family. Expansin A subfamily.

The protein localises to the secreted. It localises to the cell wall. Its subcellular location is the membrane. Causes loosening and extension of plant cell walls by disrupting non-covalent bonding between cellulose microfibrils and matrix glucans. No enzymatic activity has been found. In Arabidopsis thaliana (Mouse-ear cress), this protein is Putative expansin-A26 (EXPA26).